The sequence spans 380 residues: MSIDLGLPKVREVLSPRRKTRRIKLGKVFVGGDSPILVQSMTTTQTTNIDATLQQIAELTAAGCDIVRVAVPSRDDAQVLHIIAKKSQIPVIADIHFQPNYVYAAIDAGCAAVRVNPGNIRKFDDQIGKIAEKAKAAGVSIRIGVNAGSLDPRLLEKYGRPTAQALVDSAVWEAGLFEEYDFHDFKISVKHHDPVTMVKAYRLLAERGDWPLHLGVTEAGPAFQGTIKSSTAFAVLLAEGIGDTIRVSLSAPPVEEVKVGLEILRSLGLRERRLEIVSCPSCGRAQVDVYRLAEEVTKGLEKLTVPLRVAVMGCIVNGPGEAREADLGVASGNGKGQIFVRGQVIKTVPESEIVPTLLEEANRLAGEMPFSSGSPTIAIV.

Residues C279, C282, C314, and E321 each contribute to the [4Fe-4S] cluster site.

It belongs to the IspG family. [4Fe-4S] cluster is required as a cofactor.

It carries out the reaction (2E)-4-hydroxy-3-methylbut-2-enyl diphosphate + oxidized [flavodoxin] + H2O + 2 H(+) = 2-C-methyl-D-erythritol 2,4-cyclic diphosphate + reduced [flavodoxin]. The protein operates within isoprenoid biosynthesis; isopentenyl diphosphate biosynthesis via DXP pathway; isopentenyl diphosphate from 1-deoxy-D-xylulose 5-phosphate: step 5/6. Functionally, converts 2C-methyl-D-erythritol 2,4-cyclodiphosphate (ME-2,4cPP) into 1-hydroxy-2-methyl-2-(E)-butenyl 4-diphosphate. This Tropheryma whipplei (strain TW08/27) (Whipple's bacillus) protein is 4-hydroxy-3-methylbut-2-en-1-yl diphosphate synthase (flavodoxin).